A 599-amino-acid chain; its full sequence is Elongation factor 4 (599 aa).

The tr-type G domain maps to 2-184 (KHIRNFSIIA…RLVRDIPPPQ (183 aa)). GTP contacts are provided by residues 14-19 (DHGKST) and 131-134 (NKID).

This sequence belongs to the TRAFAC class translation factor GTPase superfamily. Classic translation factor GTPase family. LepA subfamily.

The protein resides in the cell inner membrane. It carries out the reaction GTP + H2O = GDP + phosphate + H(+). In terms of biological role, required for accurate and efficient protein synthesis under certain stress conditions. May act as a fidelity factor of the translation reaction, by catalyzing a one-codon backward translocation of tRNAs on improperly translocated ribosomes. Back-translocation proceeds from a post-translocation (POST) complex to a pre-translocation (PRE) complex, thus giving elongation factor G a second chance to translocate the tRNAs correctly. Binds to ribosomes in a GTP-dependent manner. This Yersinia enterocolitica serotype O:8 / biotype 1B (strain NCTC 13174 / 8081) protein is Elongation factor 4.